An 841-amino-acid polypeptide reads, in one-letter code: MPLRRFSPGLKAQFAFGMVFLFVQPDASAADISAQQIGGVIIPQAFSQALQDGMSVPLYIHLAGSQGRQDDQRIGSAFIWLDDGQLRIRKIQLEESEDNASVSEQTRQQLMTLANAPFNEALTIPLTDNAQLDLSLRQLLLQLVVKREALGTVLRSRSEDIGQSSVNTLSSNLSYNFGVYNNQLRNGGSNTSSYLSLNNVTALREHHVVLDGSLYGIGSGQQDSELYKAMYERDFAGHRFAGGMLDTWNLQSLGPMTAISAGKIYGLSWGNQASSTIFDSSQSATPVIAFLPAAGEVHLTRDGRLLSVQNFTMGNHEVDTRGLPYGIYDVEVEVIVNGRVISKRTQRVNKLFSRGRGVGAPLAWQIWGGSFHMDRWSENGKKTRPAKESWLAGASTSGSLSTFSWAATGYGYDNQAVGETRLTLPLGGAINVNLQNMLASDSSWSNIASISATLPGGFSSLWVNQEKTRIGNQLRRSDADNRAIGGTLNLNSLWSKLGTFSISYNDDRRYNSHYYTADYYQSVYSGTFGSLGLRAGIQRYNNGDSSANTGKYIALDLSLPLGNWFSAGMTHQNGYTMANLSARKQFDEGTIRTVGANLSRAISGDTGDDKTLSGGAYAQFDARYASGTLNVNSAADGYINTNLTANGSVGWQGKNIAASGRTDGNAGVIFDTGLENDGQISAKINGRIFPLNGKRNYLPLSPYGRYEVELQNSKNSLDSYDIVSGRKSHLTLYPGNVAVIEPEVKQMVTVSGRIRAEDGTLLANARINNHIGRTRTDENGEFVMDVDKKYPTIDFRYSGNKTCEVALELNQARGAVWVGDVVCSGLSSWAAVTQTGEENES.

The signal sequence occupies residues methionine 1 to alanine 29.

The protein belongs to the EcpC/MatD family.

Part of the ecpRABCDE operon, which encodes the E.coli common pilus (ECP). ECP is found in both commensal and pathogenic strains and plays a dual role in early-stage biofilm development and host cell recognition. The chain is Probable outer membrane usher protein EcpC (ecpC) from Escherichia coli O18:K1:H7 (strain IHE3034 / ExPEC).